Here is a 296-residue protein sequence, read N- to C-terminus: Nucleotide-binding protein Pnuc_1915 (296 aa).

8–15 serves as a coordination point for ATP; that stretch reads GISGSGKS. 57–60 serves as a coordination point for GTP; it reads DARR.

This sequence belongs to the RapZ-like family.

Its function is as follows. Displays ATPase and GTPase activities. In Polynucleobacter asymbioticus (strain DSM 18221 / CIP 109841 / QLW-P1DMWA-1) (Polynucleobacter necessarius subsp. asymbioticus), this protein is Nucleotide-binding protein Pnuc_1915.